The sequence spans 380 residues: Chaperone protein DnaJ (380 aa).

Residues Asp5–Gly70 form the J domain. Residues Gly136–Ala214 form a CR-type zinc finger. Zn(2+)-binding residues include Cys149, Cys152, Cys166, Cys169, Cys188, Cys191, Cys202, and Cys205. CXXCXGXG motif repeat units lie at residues Cys149–Gly156, Cys166–Gly173, Cys188–Gly195, and Cys202–Gly209.

This sequence belongs to the DnaJ family. In terms of assembly, homodimer. Zn(2+) is required as a cofactor.

Its subcellular location is the cytoplasm. In terms of biological role, participates actively in the response to hyperosmotic and heat shock by preventing the aggregation of stress-denatured proteins and by disaggregating proteins, also in an autonomous, DnaK-independent fashion. Unfolded proteins bind initially to DnaJ; upon interaction with the DnaJ-bound protein, DnaK hydrolyzes its bound ATP, resulting in the formation of a stable complex. GrpE releases ADP from DnaK; ATP binding to DnaK triggers the release of the substrate protein, thus completing the reaction cycle. Several rounds of ATP-dependent interactions between DnaJ, DnaK and GrpE are required for fully efficient folding. Also involved, together with DnaK and GrpE, in the DNA replication of plasmids through activation of initiation proteins. This Actinobacillus pleuropneumoniae serotype 5b (strain L20) protein is Chaperone protein DnaJ.